Here is a 580-residue protein sequence, read N- to C-terminus: Formate--tetrahydrofolate ligase (580 aa).

Thr-65–Thr-72 provides a ligand contact to ATP.

It belongs to the formate--tetrahydrofolate ligase family.

The catalysed reaction is (6S)-5,6,7,8-tetrahydrofolate + formate + ATP = (6R)-10-formyltetrahydrofolate + ADP + phosphate. It functions in the pathway one-carbon metabolism; tetrahydrofolate interconversion. This chain is Formate--tetrahydrofolate ligase, found in Shewanella baltica (strain OS223).